The chain runs to 136 residues: Nucleoside diphosphate kinase (136 aa).

Residues Lys-10, Phe-58, Arg-86, Thr-92, Arg-104, and Asn-114 each coordinate ATP. His-117 acts as the Pros-phosphohistidine intermediate in catalysis.

This sequence belongs to the NDK family. As to quaternary structure, homotetramer. The cofactor is Mg(2+).

The protein resides in the cytoplasm. It catalyses the reaction a 2'-deoxyribonucleoside 5'-diphosphate + ATP = a 2'-deoxyribonucleoside 5'-triphosphate + ADP. The catalysed reaction is a ribonucleoside 5'-diphosphate + ATP = a ribonucleoside 5'-triphosphate + ADP. In terms of biological role, major role in the synthesis of nucleoside triphosphates other than ATP. The ATP gamma phosphate is transferred to the NDP beta phosphate via a ping-pong mechanism, using a phosphorylated active-site intermediate. This chain is Nucleoside diphosphate kinase, found in Corynebacterium glutamicum (strain R).